The primary structure comprises 216 residues: Imidazole glycerol phosphate synthase subunit HisH (216 aa).

Residues 2 to 216 enclose the Glutamine amidotransferase type-1 domain; it reads RVAIIDYGSG…LISNFLRWKP (215 aa). The active-site Nucleophile is the C88. Catalysis depends on residues H196 and E198.

In terms of assembly, heterodimer of HisH and HisF.

Its subcellular location is the cytoplasm. The enzyme catalyses 5-[(5-phospho-1-deoxy-D-ribulos-1-ylimino)methylamino]-1-(5-phospho-beta-D-ribosyl)imidazole-4-carboxamide + L-glutamine = D-erythro-1-(imidazol-4-yl)glycerol 3-phosphate + 5-amino-1-(5-phospho-beta-D-ribosyl)imidazole-4-carboxamide + L-glutamate + H(+). The catalysed reaction is L-glutamine + H2O = L-glutamate + NH4(+). It functions in the pathway amino-acid biosynthesis; L-histidine biosynthesis; L-histidine from 5-phospho-alpha-D-ribose 1-diphosphate: step 5/9. IGPS catalyzes the conversion of PRFAR and glutamine to IGP, AICAR and glutamate. The HisH subunit catalyzes the hydrolysis of glutamine to glutamate and ammonia as part of the synthesis of IGP and AICAR. The resulting ammonia molecule is channeled to the active site of HisF. The protein is Imidazole glycerol phosphate synthase subunit HisH of Rhizobium meliloti (strain 1021) (Ensifer meliloti).